We begin with the raw amino-acid sequence, 278 residues long: Chitosanase (278 aa).

Residues Met1–Lys40 form the signal peptide. Glu62 (proton donor) is an active-site residue. Asp80 functions as the Nucleophile in the catalytic mechanism.

The protein belongs to the glycosyl hydrolase 46 family.

It is found in the secreted. It carries out the reaction Endohydrolysis of beta-(1-&gt;4)-linkages between D-glucosamine residues in a partly acetylated chitosan.. Aids in the defense against invading fungal pathogens by degrading their cell wall chitosan. This Streptomyces sp. (strain N174) protein is Chitosanase (csn).